We begin with the raw amino-acid sequence, 413 residues long: Tyrosine--tRNA ligase (413 aa).

The short motif at 59 to 68 (PTAPDIHLGH) is the 'HIGH' region element. The 'KMSKS' region motif lies at 243–247 (KMSKS). An ATP-binding site is contributed by Lys246. The 61-residue stretch at 351–411 (LAIGQLLKQA…GKRRFARVTL (61 aa)) folds into the S4 RNA-binding domain.

This sequence belongs to the class-I aminoacyl-tRNA synthetase family. TyrS type 2 subfamily. In terms of assembly, homodimer.

Its subcellular location is the cytoplasm. The enzyme catalyses tRNA(Tyr) + L-tyrosine + ATP = L-tyrosyl-tRNA(Tyr) + AMP + diphosphate + H(+). In terms of biological role, catalyzes the attachment of tyrosine to tRNA(Tyr) in a two-step reaction: tyrosine is first activated by ATP to form Tyr-AMP and then transferred to the acceptor end of tRNA(Tyr). The chain is Tyrosine--tRNA ligase from Burkholderia mallei (strain ATCC 23344).